Consider the following 163-residue polypeptide: Iron-sulfur cluster assembly protein 2 (163 aa).

The transit peptide at 1-48 (MMMLRQTSRKAYLGLQASPLGLGRRLYHENVIDHFENPRNVGSFNRND) directs the protein to the mitochondrion.

Belongs to the NifU family. In terms of assembly, component of the core Fe-S cluster (ISC) assembly machinery. [2Fe-2S] cluster is required as a cofactor. Mostly expressed in leaves, pollen and flowers.

It is found in the mitochondrion matrix. The protein operates within cofactor biosynthesis; iron-sulfur cluster biosynthesis. Functionally, scaffold protein for the de novo synthesis of iron-sulfur (Fe-S) clusters within mitochondria, which is required for maturation of both mitochondrial and cytoplasmic [2Fe-2S] and [4Fe-4S] proteins. First, a [2Fe-2S] cluster is transiently assembled on the scaffold protein ISCU (ISU1, ISU2 or ISU3). In a second step, the cluster is released from ISCU, transferred to a glutaredoxin, followed by the formation of mitochondrial [2Fe-2S] proteins, the synthesis of [4Fe-4S] clusters and their target-specific insertion into the recipient apoproteins. Cluster assembly on ISCU depends on the function of the cysteine desulfurase complex NFS1-ISD11, which serves as the sulfur donor for cluster synthesis, the iron-binding protein frataxin as the putative iron donor, and the electron transfer chain comprised of ferredoxin reductase and ferredoxin, which receive their electrons from NADH. The sequence is that of Iron-sulfur cluster assembly protein 2 (ISU2) from Arabidopsis thaliana (Mouse-ear cress).